Consider the following 520-residue polypeptide: Cyclic GMP-AMP synthase-like receptor (520 aa).

ATP contacts are provided by residues Ser-68 and 80–82 (EFD). 3 residues coordinate Mg(2+): Glu-80, Asp-82, and Asp-198. Asp-198 provides a ligand contact to GTP. Lys-264 is an ATP binding site. Residues Leu-288 and Asp-294 each coordinate Mn(2+).

Belongs to the mab-21 family. The cofactor is Mg(2+). Requires Mn(2+) as cofactor.

The catalysed reaction is GTP + ATP = 2',3'-cGAMP + 2 diphosphate. It carries out the reaction GTP + ATP = pppGp(2'-5')A + diphosphate. It catalyses the reaction pppGp(2'-5')A = 2',3'-cGAMP + diphosphate. Functionally, nucleotidyltransferase that catalyzes the formation of cyclic GMP-AMP (2',3'-cGAMP) from ATP and GTP and plays a key role in innate immunity. Acts as a key sensor of double-stranded RNA (dsRNA), the presence of dsRNA in the cytoplasm being a danger signal that triggers the immune responses. Directly binds dsRNA, activating the nucleotidyltransferase activity, leading to synthesis of 2',3'-cGAMP, a second messenger that binds to and activates Sting, thereby triggering the immune response via activation of the NF-kappa-B transcription factor. The polypeptide is Cyclic GMP-AMP synthase-like receptor (Microplitis demolitor (Parasitoid wasp)).